An 883-amino-acid chain; its full sequence is Kinesin-like protein 5 (883 aa).

A Kinesin motor domain is found at 6–390 (SITVTVRVRP…LKYANRAKNI (385 aa)). Residue 144 to 151 (GATGCGKT) participates in ATP binding. Coiled-coil stretches lie at residues 396–435 (RNMI…SSQS) and 563–588 (LQDE…VDEF). The tract at residues 755-785 (VSPMLEDKPEPGLLIKSPLEKKQEVNSESTQ) is disordered.

The protein belongs to the TRAFAC class myosin-kinesin ATPase superfamily. Kinesin family. Kinesin II subfamily. In terms of assembly, heterodimer with klp6.

It localises to the cytoplasm. The protein localises to the cytoskeleton. The protein resides in the chromosome. Its subcellular location is the centromere. It is found in the kinetochore. It localises to the spindle. Has a role in establishing metaphase during mitosis. Required for chromosome segregation where it generates tension during kinetochore capturing. The sequence is that of Kinesin-like protein 5 (klp5) from Schizosaccharomyces pombe (strain 972 / ATCC 24843) (Fission yeast).